We begin with the raw amino-acid sequence, 106 residues long: uncharacterized protein (106 aa).

It belongs to the HesB/IscA family.

This is an uncharacterized protein from Rhodobacter capsulatus (Rhodopseudomonas capsulata).